The sequence spans 103 residues: Large ribosomal subunit protein eL14 (103 aa).

Belongs to the eukaryotic ribosomal protein eL14 family.

This is Large ribosomal subunit protein eL14 from Ignicoccus hospitalis (strain KIN4/I / DSM 18386 / JCM 14125).